We begin with the raw amino-acid sequence, 413 residues long: Glucose-1-phosphate adenylyltransferase (413 aa).

Alpha-D-glucose 1-phosphate-binding positions include G169, 184-185 (EK), and S201.

It belongs to the bacterial/plant glucose-1-phosphate adenylyltransferase family. Homotetramer.

The enzyme catalyses alpha-D-glucose 1-phosphate + ATP + H(+) = ADP-alpha-D-glucose + diphosphate. It functions in the pathway glycan biosynthesis; glycogen biosynthesis. Functionally, involved in the biosynthesis of ADP-glucose, a building block required for the elongation reactions to produce glycogen. Catalyzes the reaction between ATP and alpha-D-glucose 1-phosphate (G1P) to produce pyrophosphate and ADP-Glc. This chain is Glucose-1-phosphate adenylyltransferase, found in Trichlorobacter lovleyi (strain ATCC BAA-1151 / DSM 17278 / SZ) (Geobacter lovleyi).